The primary structure comprises 343 residues: Heat-inducible transcription repressor HrcA (343 aa).

This sequence belongs to the HrcA family.

Functionally, negative regulator of class I heat shock genes (grpE-dnaK-dnaJ and groELS operons). Prevents heat-shock induction of these operons. The sequence is that of Heat-inducible transcription repressor HrcA from Bacillus pumilus (strain SAFR-032).